The primary structure comprises 199 residues: Glycerol-3-phosphate acyltransferase (199 aa).

5 helical membrane-spanning segments follow: residues 4–24 (FALF…AILI), 56–76 (LAVL…GYYL), 80–100 (QFEL…PIFF), 115–135 (IAPI…FVFL), and 154–176 (YVWW…LIYR).

Belongs to the PlsY family. Probably interacts with PlsX.

It localises to the cell inner membrane. It carries out the reaction an acyl phosphate + sn-glycerol 3-phosphate = a 1-acyl-sn-glycero-3-phosphate + phosphate. It participates in lipid metabolism; phospholipid metabolism. Functionally, catalyzes the transfer of an acyl group from acyl-phosphate (acyl-PO(4)) to glycerol-3-phosphate (G3P) to form lysophosphatidic acid (LPA). This enzyme utilizes acyl-phosphate as fatty acyl donor, but not acyl-CoA or acyl-ACP. This is Glycerol-3-phosphate acyltransferase from Haemophilus influenzae (strain PittGG).